We begin with the raw amino-acid sequence, 152 residues long: Succinate dehydrogenase [ubiquinone] cytochrome b small subunit, mitochondrial (152 aa).

Residues 1–21 (MATLLRVSSLCRANRASAFKS) constitute a mitochondrion transit peptide. Over 22-56 (LLIRPVPCLTQDHHMVQTSQIHTSPNHHAGSKAAS) the chain is Mitochondrial matrix. A helical membrane pass occupies residues 57 to 78 (MHWTSERALSVALLGLLPAAYL). Residues 79–83 (YPGAA) lie on the Mitochondrial intermembrane side of the membrane. A helical membrane pass occupies residues 84–104 (MDYSLAAALTLHGHWGLGQVV). Histidine 95 is a binding site for heme b. Over 105–113 (TDYVHGDAK) the chain is Mitochondrial matrix. Tyrosine 107 lines the a ubiquinone pocket. A helical transmembrane segment spans residues 114-135 (IKMANTSLFALSALTFAGLCYF). The Mitochondrial intermembrane segment spans residues 136–152 (NYHDVGICKAVSMLWSL).

This sequence belongs to the CybS family. In terms of assembly, component of complex II composed of four subunits: the flavoprotein (FP) SDHA, iron-sulfur protein (IP) SDHB, and a cytochrome b560 composed of SDHC and SDHD.

Its subcellular location is the mitochondrion inner membrane. It participates in carbohydrate metabolism; tricarboxylic acid cycle. Its function is as follows. Membrane-anchoring subunit of succinate dehydrogenase (SDH) that is involved in complex II of the mitochondrial electron transport chain and is responsible for transferring electrons from succinate to ubiquinone (coenzyme Q). SDH also oxidizes malate to the non-canonical enol form of oxaloacetate, enol-oxaloacetate. Enol-oxaloacetate, which is a potent inhibitor of the succinate dehydrogenase activity, is further isomerized into keto-oxaloacetate. The polypeptide is Succinate dehydrogenase [ubiquinone] cytochrome b small subunit, mitochondrial (sdhd) (Xenopus tropicalis (Western clawed frog)).